The following is a 331-amino-acid chain: Isopentenyl-diphosphate delta-isomerase (331 aa).

4–5 (RK) is a substrate binding site. Residues 59-61 (AMT), Ser89, and Asn116 contribute to the FMN site. Position 146 (Gln146) interacts with substrate. Mg(2+) is bound at residue Glu147. FMN contacts are provided by residues Lys178, Ser203, Thr208, 252 to 254 (GIR), and 273 to 274 (SR).

The protein belongs to the IPP isomerase type 2 family. Homooctamer. Dimer of tetramers. It depends on FMN as a cofactor. NADPH is required as a cofactor. The cofactor is Mg(2+).

It localises to the cytoplasm. The catalysed reaction is isopentenyl diphosphate = dimethylallyl diphosphate. Functionally, involved in the biosynthesis of isoprenoids. Catalyzes the 1,3-allylic rearrangement of the homoallylic substrate isopentenyl (IPP) to its allylic isomer, dimethylallyl diphosphate (DMAPP). The chain is Isopentenyl-diphosphate delta-isomerase from Streptococcus mutans serotype c (strain ATCC 700610 / UA159).